A 250-amino-acid polypeptide reads, in one-letter code: MPAPEGEAIWLWLGTAGMFLGMLYFIARGWGETDSRRQKFYIATILITAIAFVNYLAMALGFGLTIVEIAGEQRPIYWARYSDWLFTTPLLLYDLGLLAGADRNTISSLVSLDVLMIGTGLVATLSAGSGVLSAGAERLVWWGISTAFLLVLLYFLFSSLSGRVADLPSDTRSTFKTLRNLVTVVWLVYPVWWLVGTEGIGLVGIGIETAGFMVIDLVAKVGFGIILLRSHGVLDGAAETTGAGATATAD.

Over 1-9 the chain is Extracellular; sequence MPAPEGEAI. A helical membrane pass occupies residues 10 to 27; the sequence is WLWLGTAGMFLGMLYFIA. Residues 28 to 41 are Cytoplasmic-facing; sequence RGWGETDSRRQKFY. The helical transmembrane segment at 42 to 60 threads the bilayer; that stretch reads IATILITAIAFVNYLAMAL. At 61–77 the chain is on the extracellular side; sequence GFGLTIVEIAGEQRPIY. The helical transmembrane segment at 78-94 threads the bilayer; it reads WARYSDWLFTTPLLLYD. Over 95–105 the chain is Cytoplasmic; it reads LGLLAGADRNT. Residues 106–125 traverse the membrane as a helical segment; that stretch reads ISSLVSLDVLMIGTGLVATL. At 126-138 the chain is on the extracellular side; sequence SAGSGVLSAGAER. A helical transmembrane segment spans residues 139-158; sequence LVWWGISTAFLLVLLYFLFS. Residues 159-176 lie on the Cytoplasmic side of the membrane; it reads SLSGRVADLPSDTRSTFK. The chain crosses the membrane as a helical span at residues 177-195; sequence TLRNLVTVVWLVYPVWWLV. Residues 196–207 lie on the Extracellular side of the membrane; that stretch reads GTEGIGLVGIGI. Residues 208–227 traverse the membrane as a helical segment; that stretch reads ETAGFMVIDLVAKVGFGIIL. N6-(retinylidene)lysine is present on Lys-220. Residues 228 to 250 lie on the Cytoplasmic side of the membrane; that stretch reads LRSHGVLDGAAETTGAGATATAD.

The protein belongs to the archaeal/bacterial/fungal opsin family. Homotrimer. Binds bacterioruberin in the crevice between neighboring subunits.

It localises to the cell membrane. Its function is as follows. Light-driven proton pump. In Haloarcula vallismortis (Halobacterium vallismortis), this protein is Cruxrhodopsin-3 (cop3).